Reading from the N-terminus, the 202-residue chain is Adenylyl-sulfate kinase (202 aa).

31–38 contacts ATP; that stretch reads GLSASGKS. Serine 105 (phosphoserine intermediate) is an active-site residue.

This sequence belongs to the APS kinase family.

The enzyme catalyses adenosine 5'-phosphosulfate + ATP = 3'-phosphoadenylyl sulfate + ADP + H(+). It functions in the pathway sulfur metabolism; hydrogen sulfide biosynthesis; sulfite from sulfate: step 2/3. Catalyzes the synthesis of activated sulfate. This is Adenylyl-sulfate kinase (MET14) from Saccharomyces pastorianus (Lager yeast).